The following is a 580-amino-acid chain: Alpha-thujene synthase TPS3, chloroplastic (580 aa).

The transit peptide at 1 to 26 (MALQLLTPSFSFQHSPSPHRLTTLRY) directs the protein to the chloroplast. Positions 296, 333, 337, 473, and 476 each coordinate (2E)-geranyl diphosphate. Mg(2+)-binding residues include D333 and D337. The DDXXD motif motif lies at 333–337 (DDVYD). 3 residues coordinate Mg(2+): D476, T480, and E484.

This sequence belongs to the terpene synthase family. Tpsb subfamily. In terms of assembly, monomer. Mg(2+) is required as a cofactor. The cofactor is Mn(2+). Mostly expressed in developing and mature fruits, and, to a lower extent, in male leaves. Barely detectable in female leaves and shoots.

It is found in the plastid. The protein resides in the chloroplast. It catalyses the reaction (2E)-geranyl diphosphate = alpha-thujene + diphosphate. The enzyme catalyses (2E)-geranyl diphosphate = (1R,5R)-sabinene + diphosphate. It functions in the pathway secondary metabolite biosynthesis; terpenoid biosynthesis. Monoterpene synthase (TPS) involved in the biosynthesis of monoterpene natural products used by traditional Chinese medicine to treat headache, inflammation and intoxication. Catalyzes the conversion of (2E)-geranyl diphosphate (GPP) into alpha-thujene and (1R,5R)-sabinene. The protein is Alpha-thujene synthase TPS3, chloroplastic of Litsea cubeba (Aromatic litsea).